The following is a 111-amino-acid chain: Cytochrome c (111 aa).

N-acetylalanine is present on A1. Heme c contacts are provided by C22, C25, and H26. K80 is subject to N6,N6,N6-trimethyllysine. M88 lines the heme c pocket. K94 carries the post-translational modification N6,N6,N6-trimethyllysine.

It belongs to the cytochrome c family. Post-translationally, binds 1 heme c group covalently per subunit.

The protein resides in the mitochondrion intermembrane space. In terms of biological role, electron carrier protein. The oxidized form of the cytochrome c heme group can accept an electron from the heme group of the cytochrome c1 subunit of cytochrome reductase. Cytochrome c then transfers this electron to the cytochrome oxidase complex, the final protein carrier in the mitochondrial electron-transport chain. The chain is Cytochrome c from Cannabis sativa (Hemp).